The chain runs to 325 residues: Elongation factor P--(R)-beta-lysine ligase (325 aa).

76–78 is a substrate binding site; it reads SPE. ATP contacts are provided by residues 100 to 102 and asparagine 109; that span reads RNE. Tyrosine 118 is a binding site for substrate. 244–245 contributes to the ATP binding site; sequence EL. Glutamate 251 lines the substrate pocket. ATP is bound at residue glycine 300.

It belongs to the class-II aminoacyl-tRNA synthetase family. EpmA subfamily. In terms of assembly, homodimer.

The enzyme catalyses D-beta-lysine + L-lysyl-[protein] + ATP = N(6)-((3R)-3,6-diaminohexanoyl)-L-lysyl-[protein] + AMP + diphosphate + H(+). With EpmB is involved in the beta-lysylation step of the post-translational modification of translation elongation factor P (EF-P). Catalyzes the ATP-dependent activation of (R)-beta-lysine produced by EpmB, forming a lysyl-adenylate, from which the beta-lysyl moiety is then transferred to the epsilon-amino group of a conserved specific lysine residue in EF-P. This Pectobacterium atrosepticum (strain SCRI 1043 / ATCC BAA-672) (Erwinia carotovora subsp. atroseptica) protein is Elongation factor P--(R)-beta-lysine ligase.